The primary structure comprises 600 residues: UPF0588 membrane protein C20F10.02c (600 aa).

Transmembrane regions (helical) follow at residues 409 to 429 (LSATMYFLYFSFVYRAMTSLV) and 437 to 457 (YHWLELWRVLFSFLDFVSVLI).

This sequence belongs to the UPF0588 family.

It localises to the membrane. The protein is UPF0588 membrane protein C20F10.02c of Schizosaccharomyces pombe (strain 972 / ATCC 24843) (Fission yeast).